Here is a 376-residue protein sequence, read N- to C-terminus: Chaperone protein DnaJ (376 aa).

In terms of domain architecture, J spans 5–70; that stretch reads DYYEILGVSK…QKRAAYDQYG (66 aa). The CR-type zinc-finger motif lies at 131–209; that stretch reads GVTKEIRIPT…CHGHGRVERS (79 aa). Cysteine 144, cysteine 147, cysteine 161, cysteine 164, cysteine 183, cysteine 186, cysteine 197, and cysteine 200 together coordinate Zn(2+). CXXCXGXG motif repeat units follow at residues 144 to 151, 161 to 168, 183 to 190, and 197 to 204; these read CDVCHGSG, CPTCHGSG, CPHCQGRG, and CNKCHGHG.

Belongs to the DnaJ family. In terms of assembly, homodimer. Zn(2+) serves as cofactor.

Its subcellular location is the cytoplasm. In terms of biological role, participates actively in the response to hyperosmotic and heat shock by preventing the aggregation of stress-denatured proteins and by disaggregating proteins, also in an autonomous, DnaK-independent fashion. Unfolded proteins bind initially to DnaJ; upon interaction with the DnaJ-bound protein, DnaK hydrolyzes its bound ATP, resulting in the formation of a stable complex. GrpE releases ADP from DnaK; ATP binding to DnaK triggers the release of the substrate protein, thus completing the reaction cycle. Several rounds of ATP-dependent interactions between DnaJ, DnaK and GrpE are required for fully efficient folding. Also involved, together with DnaK and GrpE, in the DNA replication of plasmids through activation of initiation proteins. In Shigella flexneri, this protein is Chaperone protein DnaJ.